We begin with the raw amino-acid sequence, 38 residues long: Large ribosomal subunit protein bL36 (38 aa).

The protein belongs to the bacterial ribosomal protein bL36 family.

This Streptococcus pneumoniae serotype 4 (strain ATCC BAA-334 / TIGR4) protein is Large ribosomal subunit protein bL36 (rpmJ).